Consider the following 238-residue polypeptide: Small ribosomal subunit protein uS2 (238 aa).

It belongs to the universal ribosomal protein uS2 family.

In Chloroflexus aurantiacus (strain ATCC 29366 / DSM 635 / J-10-fl), this protein is Small ribosomal subunit protein uS2.